Reading from the N-terminus, the 371-residue chain is Vasculin (371 aa).

Belongs to the vasculin family.

It localises to the nucleus. Its function is as follows. Functions as a GC-rich promoter-specific transactivating transcription factor. The sequence is that of Vasculin (gpbp1) from Xenopus laevis (African clawed frog).